A 473-amino-acid chain; its full sequence is H(+)/Cl(-) exchange transporter ClcA (473 aa).

At 1 to 32 (MKTDTPSLETPQAARLRRRQLIRQLLERDKTP) the chain is on the cytoplasmic side. A helical membrane pass occupies residues 33-69 (LAILFMAAVVGTLVGLAAVAFDKGVAWLQNQRMGALV). Topologically, residues 70–76 (HTADNYP) are periplasmic. A helical membrane pass occupies residues 77 to 100 (LLLTVAFLCSAVLAMFGYFLVRKY). Residues 106–110 (GSGIP) carry the Selectivity filter part_1 motif. Ser-107 contributes to the chloride binding site. The segment at residues 109 to 116 (IPEIEGAL) is an intramembrane region (helical). Residues 117 to 123 (EDQRPVR) lie on the Cytoplasmic side of the membrane. The next 2 helical transmembrane spans lie at 124–141 (WWRVLPVKFFGGLGTLGG) and 148–166 (EGPTVQIGGNIGRMVLDIF). The short motif at 146–150 (GREGP) is the Selectivity filter part_2 element. Residues 167–176 (RLKGDEARHT) lie on the Cytoplasmic side of the membrane. 2 consecutive intramembrane regions (helical) follow at residues 177-189 (LLATGAAAGLAAA) and 193-201 (PLAGILFII). At 202 to 214 (EEMRPQFRYTLIS) the chain is on the cytoplasmic side. Residues 215 to 232 (IKAVFIGVIMSTIMYRIF) traverse the membrane as a helical segment. At 233–252 (NHEVALIDVGKLSDAPLNTL) the chain is on the periplasmic side. Residues 253 to 281 (WLYLILGIIFGIFGPIFNKWVLGMQDLLH) traverse the membrane as a helical segment. Over 282-287 (RVHGGN) the chain is Cytoplasmic. Residues 288–309 (ITKWVLMGGAIGGLCGLLGFVA) form a helical membrane-spanning segment. The Periplasmic portion of the chain corresponds to 310–329 (PATSGGGFNLIPIATAGNFS). Helical transmembrane passes span 330-349 (MGMLVFIFVARVITTLLCFS) and 355-376 (GIFAPMLALGTVLGTAFGMVAV). The Selectivity filter part_3 signature appears at 355–359 (GIFAP). Residues Ile-356 and Phe-357 each contribute to the chloride site. The Periplasmic segment spans residues 377 to 386 (ELFPQYHLEA). Residues 387 to 401 (GTFAIAGMGALLAAS) constitute an intramembrane region (helical). An intramembrane region (note=Loop between two helices) is located at residues 402–404 (IRA). Residues 405–416 (PLTGIILVLEMT) constitute an intramembrane region (helical). The segment at residues 417–421 (DNYQL) is an intramembrane region (note=Loop between two helices). Residues 422 to 438 (ILPMIITGLGATLLAQF) form a helical membrane-spanning segment. Over 439 to 473 (TGGKPLYSAILARTLAKQEAEQLARSKAASASENT) the chain is Cytoplasmic. Tyr-445 is a binding site for chloride.

This sequence belongs to the chloride channel (TC 2.A.49) family. ClcA subfamily. In terms of assembly, homodimer.

The protein resides in the cell inner membrane. The enzyme catalyses 2 chloride(in) + H(+)(out) = 2 chloride(out) + H(+)(in). Proton-coupled chloride transporter. Functions as antiport system and exchanges two chloride ions for 1 proton. Probably acts as an electrical shunt for an outwardly-directed proton pump that is linked to amino acid decarboxylation, as part of the extreme acid resistance (XAR) response. This is H(+)/Cl(-) exchange transporter ClcA from Escherichia coli O139:H28 (strain E24377A / ETEC).